The following is a 209-amino-acid chain: Max dimerization protein 4 (209 aa).

The interaction with SIN3A and SIN3B stretch occupies residues 6-23 (LLLLLEAAEYLERRDREA). A bHLH domain is found at 53–105 (NNRSSHNELEKHRRAKLRLYLEQLKQLGPLGPDSTRHTTLSLLKRAKMHIKKL). Residues 137-209 (SVERVRTDST…CRRPGCPGLS (73 aa)) are disordered. The segment covering 153–163 (DDSEQEVDIEG) has biased composition (acidic residues). Residues 185 to 195 (SLQSSGCSDSS) show a composition bias toward polar residues.

As to quaternary structure, efficient DNA binding requires dimerization with another bHLH protein. Binds DNA as a heterodimer with MAX. Interacts with SIN3A AND SIN3B. Interacts with RNF17.

The protein localises to the nucleus. Transcriptional repressor. Binds with MAX to form a sequence-specific DNA-binding protein complex which recognizes the core sequence 5'-CAC[GA]TG-3'. Antagonizes MYC transcriptional activity by competing for MAX and suppresses MYC dependent cell transformation. This Mus musculus (Mouse) protein is Max dimerization protein 4 (Mxd4).